We begin with the raw amino-acid sequence, 584 residues long: 2-succinyl-5-enolpyruvyl-6-hydroxy-3-cyclohexene-1-carboxylate synthase (584 aa).

It belongs to the TPP enzyme family. MenD subfamily. As to quaternary structure, homodimer. Mg(2+) serves as cofactor. Mn(2+) is required as a cofactor. Requires thiamine diphosphate as cofactor.

It catalyses the reaction isochorismate + 2-oxoglutarate + H(+) = 5-enolpyruvoyl-6-hydroxy-2-succinyl-cyclohex-3-ene-1-carboxylate + CO2. Its pathway is quinol/quinone metabolism; 1,4-dihydroxy-2-naphthoate biosynthesis; 1,4-dihydroxy-2-naphthoate from chorismate: step 2/7. The protein operates within quinol/quinone metabolism; menaquinone biosynthesis. Its function is as follows. Catalyzes the thiamine diphosphate-dependent decarboxylation of 2-oxoglutarate and the subsequent addition of the resulting succinic semialdehyde-thiamine pyrophosphate anion to isochorismate to yield 2-succinyl-5-enolpyruvyl-6-hydroxy-3-cyclohexene-1-carboxylate (SEPHCHC). The chain is 2-succinyl-5-enolpyruvyl-6-hydroxy-3-cyclohexene-1-carboxylate synthase from Bacillus cereus (strain ATCC 10987 / NRS 248).